The following is an 85-amino-acid chain: Large ribosomal subunit protein bL31B (85 aa).

It belongs to the bacterial ribosomal protein bL31 family. Type B subfamily. As to quaternary structure, part of the 50S ribosomal subunit.

In Micrococcus luteus (strain ATCC 4698 / DSM 20030 / JCM 1464 / CCM 169 / CCUG 5858 / IAM 1056 / NBRC 3333 / NCIMB 9278 / NCTC 2665 / VKM Ac-2230) (Micrococcus lysodeikticus), this protein is Large ribosomal subunit protein bL31B.